Consider the following 204-residue polypeptide: Inactive ribonuclease-like protein 9 (204 aa).

The N-terminal stretch at 1–26 is a signal peptide; sequence MMRTLITIHPLPLLLLLQQLLQPVQF. Intrachain disulfides connect Cys97–Cys152, Cys115–Cys167, and Cys122–Cys129. Residues Asn130 and Asn142 are each glycosylated (N-linked (GlcNAc...) asparagine).

The protein belongs to the pancreatic ribonuclease family.

It localises to the secreted. In terms of biological role, does not exhibit any ribonuclease activity. In Symphalangus syndactylus (Siamang), this protein is Inactive ribonuclease-like protein 9 (RNASE9).